Here is a 943-residue protein sequence, read N- to C-terminus: Isoleucine--tRNA ligase (943 aa).

A 'HIGH' region motif is present at residues 58–68; sequence PYANGKIHIGH. Glutamate 567 is a binding site for L-isoleucyl-5'-AMP. The short motif at 608 to 612 is the 'KMSKS' region element; it reads KMSKS. Residue lysine 611 coordinates ATP. Zn(2+) contacts are provided by cysteine 906, cysteine 909, cysteine 926, and cysteine 929.

It belongs to the class-I aminoacyl-tRNA synthetase family. IleS type 1 subfamily. As to quaternary structure, monomer. It depends on Zn(2+) as a cofactor.

Its subcellular location is the cytoplasm. It catalyses the reaction tRNA(Ile) + L-isoleucine + ATP = L-isoleucyl-tRNA(Ile) + AMP + diphosphate. Catalyzes the attachment of isoleucine to tRNA(Ile). As IleRS can inadvertently accommodate and process structurally similar amino acids such as valine, to avoid such errors it has two additional distinct tRNA(Ile)-dependent editing activities. One activity is designated as 'pretransfer' editing and involves the hydrolysis of activated Val-AMP. The other activity is designated 'posttransfer' editing and involves deacylation of mischarged Val-tRNA(Ile). The chain is Isoleucine--tRNA ligase from Pseudomonas putida (strain ATCC 47054 / DSM 6125 / CFBP 8728 / NCIMB 11950 / KT2440).